A 1270-amino-acid polypeptide reads, in one-letter code: Vigilin (1270 aa).

The span at 1–11 (MSSVAVLTQES) shows a compositional bias: polar residues. Disordered stretches follow at residues 1 to 23 (MSSV…TQQQ) and 28 to 47 (ALNS…FPPL). 11 consecutive KH domains span residues 150–188 (ASAT…IPRP), 219–260 (DKRA…IPPP), 291–333 (KKKT…IPPT), 360–402 (ANSF…EFTE), 431–473 (INRT…IPPD), 504–545 (ENER…NFPD), 577–619 (VENS…LPGR), 651–693 (ANIT…FPTE), 724–766 (QTKS…FPTS), 798–840 (DNVV…LPTV), and 872–913 (EAQV…FPDR). The tract at residues 911 to 947 (PDREENPAPVAEPALQENGEEGGEGKDGKDADPSSPR) is disordered. Residues 933 to 947 (GEGKDGKDADPSSPR) show a composition bias toward basic and acidic residues. KH domains follow at residues 970 to 1012 (ALVP…VPAP), 1051 to 1093 (ALRS…FPDK), and 1126 to 1168 (LEQM…FPQS). The interval 1217–1270 (SHEESKVPSKGFVVRDAPCGTVNNEKAPDMSSSEDFPSFGAQVAPKTLPWGPKR) is disordered.

The protein resides in the cytoplasm. The sequence is that of Vigilin (HDLBP) from Gallus gallus (Chicken).